A 122-amino-acid chain; its full sequence is Large ribosomal subunit protein uL14c (122 aa).

Belongs to the universal ribosomal protein uL14 family. Part of the 50S ribosomal subunit.

The protein resides in the plastid. It localises to the chloroplast. In terms of biological role, binds to 23S rRNA. The chain is Large ribosomal subunit protein uL14c from Calycanthus floridus var. glaucus (Eastern sweetshrub).